The chain runs to 173 residues: Protein FAM180A (173 aa).

The signal sequence occupies residues 1–17 (MHWKMLLLLLLYYNAEA).

The protein belongs to the FAM180 family.

It is found in the secreted. The sequence is that of Protein FAM180A (FAM180A) from Homo sapiens (Human).